The chain runs to 137 residues: 3-hydroxyacyl-[acyl-carrier-protein] dehydratase FabZ (137 aa).

H46 is an active-site residue.

Belongs to the thioester dehydratase family. FabZ subfamily.

The protein localises to the cytoplasm. It carries out the reaction a (3R)-hydroxyacyl-[ACP] = a (2E)-enoyl-[ACP] + H2O. Involved in unsaturated fatty acids biosynthesis. Catalyzes the dehydration of short chain beta-hydroxyacyl-ACPs and long chain saturated and unsaturated beta-hydroxyacyl-ACPs. This chain is 3-hydroxyacyl-[acyl-carrier-protein] dehydratase FabZ, found in Thermotoga neapolitana (strain ATCC 49049 / DSM 4359 / NBRC 107923 / NS-E).